A 642-amino-acid chain; its full sequence is Threonine--tRNA ligase (642 aa).

The region spanning 1 to 61 (MPVITLPDGS…HEDASLSIIT (61 aa)) is the TGS domain. The segment at 243-534 (DHRKIGKQLD…LIEEYAGRFP (292 aa)) is catalytic. The Zn(2+) site is built by C334, H385, and H511.

Belongs to the class-II aminoacyl-tRNA synthetase family. In terms of assembly, homodimer. Zn(2+) serves as cofactor.

The protein resides in the cytoplasm. The catalysed reaction is tRNA(Thr) + L-threonine + ATP = L-threonyl-tRNA(Thr) + AMP + diphosphate + H(+). Catalyzes the attachment of threonine to tRNA(Thr) in a two-step reaction: L-threonine is first activated by ATP to form Thr-AMP and then transferred to the acceptor end of tRNA(Thr). Also edits incorrectly charged L-seryl-tRNA(Thr). The sequence is that of Threonine--tRNA ligase from Shewanella amazonensis (strain ATCC BAA-1098 / SB2B).